The sequence spans 911 residues: Alpha-actinin-4 (911 aa).

Residues 1–269 form an actin-binding region; it reads MVDYHAANQA…YVSSFYHAFS (269 aa). The segment at 12–26 is interaction with VCL; it reads QYGPSSGGNGTGGGG. Residues 12 to 31 are disordered; that stretch reads QYGPSSGGNGTGGGGGMGDY. Over residues 16 to 29 the composition is skewed to gly residues; that stretch reads SSGGNGTGGGGGMG. At Y31 the chain carries Phosphotyrosine. The interval 40–61 is interaction with VCL; it reads RDLLLDPAWEKQQRKTFTAWCN. 2 consecutive Calponin-homology (CH) domains span residues 50-154 and 163-269; these read KQQR…LRFA and TSAK…HAFS. An LXXLL motif motif is present at residues 84-88; it reads LMLLL. The interaction with VCL stretch occupies residues 108 to 126; that stretch reads KINNVNKALDFIASKGVKL. The residue at position 114 (K114) is an N6-acetyllysine. A polyphosphoinositide (PIP2)-binding region spans residues 177–192; sequence TAPYKNVNVQNFHISW. Residue K214 is modified to N6-acetyllysine. A Phosphothreonine modification is found at T249. Spectrin repeat units lie at residues 293–403, 413–518, 528–639, and 649–752; these read HLME…WLLN, HLAE…ALEK, QLHL…ALLE, and HLRR…EVEN. An N6-acetyllysine mark is found at K592 and K625. Residue S696 is modified to Phosphoserine. Positions 736 to 911 are mediates interaction with MICALL2; that stretch reads WEQLLTTIAR…STALYGESDL (176 aa). 2 EF-hand domains span residues 765–800 and 806–841; these read EQMQ…LGYD and QGDA…ETTD. D778 lines the Ca(2+) pocket. K779 is subject to N6-acetyllysine. Ca(2+) contacts are provided by D780 and E789. Residue K859 is modified to N6-acetyllysine. S909 bears the Phosphoserine mark.

It belongs to the alpha-actinin family. In terms of assembly, homodimer; antiparallel. Interacts with MAGI1. Interacts with MICALL2 (preferentially in opened conformation); stimulated by RAB13 activation. Identified in a IGF2BP1-dependent mRNP granule complex containing untranslated mRNAs. Component of the CART complex, at least composed of ACTN4, HGS/HRS, MYO5B and TRIM3. Binds TRIM3 at the N-terminus. Interacts with PDLIM2. Identified in a complex with CASK, IQGAP1, MAGI2, NPHS1, SPTAN1 and SPTBN1. Interacts with PPARG and RARA. Binds to VCL; this interaction triggers VCL conformational changes. Interacts with SEPTIN14. Interacts with IGSF8. In terms of tissue distribution, expressed in the foot process layer of podocytes in the kidney glomerulus but not in tubules (at protein level).

The protein localises to the nucleus. It is found in the cytoplasm. The protein resides in the cell junction. It localises to the cytoskeleton. Its subcellular location is the stress fiber. The protein localises to the perinuclear region. F-actin cross-linking protein which is thought to anchor actin to a variety of intracellular structures. This is a bundling protein. Probably involved in vesicular trafficking via its association with the CART complex. The CART complex is necessary for efficient transferrin receptor recycling but not for EGFR degradation. Involved in tight junction assembly in epithelial cells probably through interaction with MICALL2. Links MICALL2 to the actin cytoskeleton and recruits it to the tight junctions. May also function as a transcriptional coactivator, stimulating transcription mediated by the nuclear hormone receptors PPARG and RARA. Association with IGSF8 regulates the immune synapse formation and is required for efficient T-cell activation. In Rattus norvegicus (Rat), this protein is Alpha-actinin-4.